The sequence spans 268 residues: tRNA (guanine-N(1)-)-methyltransferase (268 aa).

S-adenosyl-L-methionine-binding positions include G110 and 129–134 (IGDFVM). The tract at residues 246–268 (WGAPPAPVKRHRKRRPETTESAS) is disordered.

Belongs to the RNA methyltransferase TrmD family. Homodimer.

Its subcellular location is the cytoplasm. The catalysed reaction is guanosine(37) in tRNA + S-adenosyl-L-methionine = N(1)-methylguanosine(37) in tRNA + S-adenosyl-L-homocysteine + H(+). Its function is as follows. Specifically methylates guanosine-37 in various tRNAs. In Deinococcus deserti (strain DSM 17065 / CIP 109153 / LMG 22923 / VCD115), this protein is tRNA (guanine-N(1)-)-methyltransferase.